A 155-amino-acid polypeptide reads, in one-letter code: Small ribosomal subunit protein uS7 (155 aa).

The protein belongs to the universal ribosomal protein uS7 family. Part of the 30S ribosomal subunit. Contacts proteins S9 and S11.

Functionally, one of the primary rRNA binding proteins, it binds directly to 16S rRNA where it nucleates assembly of the head domain of the 30S subunit. Is located at the subunit interface close to the decoding center, probably blocks exit of the E-site tRNA. This is Small ribosomal subunit protein uS7 from Chloroherpeton thalassium (strain ATCC 35110 / GB-78).